The following is a 1016-amino-acid chain: Probable outer membrane protein PmpH (1016 aa).

Positions 1–24 are cleaved as a signal peptide; the sequence is MPFSLRSTSFCFLACLCSYSYGFA. One can recognise an Autotransporter domain in the interval 697-1016; that stretch reads GELVPNSLWV…FVSMGLNRIF (320 aa).

It belongs to the PMP outer membrane protein family.

It is found in the secreted. The protein resides in the cell wall. It localises to the cell outer membrane. The polypeptide is Probable outer membrane protein PmpH (pmpH) (Chlamydia trachomatis serovar D (strain ATCC VR-885 / DSM 19411 / UW-3/Cx)).